Here is a 300-residue protein sequence, read N- to C-terminus: 4-hydroxy-tetrahydrodipicolinate synthase (300 aa).

A pyruvate-binding site is contributed by T49. Y137 serves as the catalytic Proton donor/acceptor. Residue K166 is the Schiff-base intermediate with substrate of the active site. I208 is a binding site for pyruvate.

The protein belongs to the DapA family. Homotetramer; dimer of dimers.

Its subcellular location is the cytoplasm. It carries out the reaction L-aspartate 4-semialdehyde + pyruvate = (2S,4S)-4-hydroxy-2,3,4,5-tetrahydrodipicolinate + H2O + H(+). It functions in the pathway amino-acid biosynthesis; L-lysine biosynthesis via DAP pathway; (S)-tetrahydrodipicolinate from L-aspartate: step 3/4. In terms of biological role, catalyzes the condensation of (S)-aspartate-beta-semialdehyde [(S)-ASA] and pyruvate to 4-hydroxy-tetrahydrodipicolinate (HTPA). The chain is 4-hydroxy-tetrahydrodipicolinate synthase from Methanopyrus kandleri (strain AV19 / DSM 6324 / JCM 9639 / NBRC 100938).